Consider the following 183-residue polypeptide: Capsid protein (183 aa).

The tract at residues 136-183 is disordered; that stretch reads NAPILSTLPETTVVRQRGRAPRRRTPSPRRRRSQSPRRRRSQSPASQC. A compositionally biased stretch (basic residues) spans 151–176; that stretch reads QRGRAPRRRTPSPRRRRSQSPRRRRS. The stretch at 155 to 161 is one 1; half-length repeat; the sequence is APRRRTP. The 3 X 8 AA repeats of S-P-R-R-R-[PR]-S-Q stretch occupies residues 155-177; that stretch reads APRRRTPSPRRRRSQSPRRRRSQ. Residues 158–175 carry the Bipartite nuclear localization signal motif; sequence RRTPSPRRRRSQSPRRRR. Phosphoserine; by host occurs at positions 162 and 170. Tandem repeats lie at residues 162 to 169 and 170 to 177. Positions 177-183 are RNA binding; the sequence is QSPASQC.

Belongs to the orthohepadnavirus core antigen family. Homodimerizes, then multimerizes. Interacts with cytosol exposed regions of viral L glycoprotein present in the reticulum-to-Golgi compartment. Interacts with human FLNB. Phosphorylated form interacts with host importin alpha; this interaction depends on the exposure of the NLS, which itself depends upon genome maturation and/or phosphorylation of the capsid protein. Interacts with host NUP153. Phosphorylated by host SRPK1, SRPK2, and maybe protein kinase C or GAPDH. Phosphorylation is critical for pregenomic RNA packaging. Protein kinase C phosphorylation is stimulated by HBx protein and may play a role in transport of the viral genome to the nucleus at the late step during the viral replication cycle.

It localises to the virion. Its subcellular location is the host cytoplasm. Its function is as follows. Self assembles to form an icosahedral capsid. Most capsids appear to be large particles with an icosahedral symmetry of T=4 and consist of 240 copies of capsid protein, though a fraction forms smaller T=3 particles consisting of 180 capsid proteins. Entering capsids are transported along microtubules to the nucleus. Phosphorylation of the capsid is thought to induce exposure of nuclear localization signal in the C-terminal portion of the capsid protein that allows binding to the nuclear pore complex via the importin (karyopherin-) alpha and beta. Capsids are imported in intact form through the nuclear pore into the nuclear basket, where it probably binds NUP153. Only capsids that contain the mature viral genome can release the viral DNA and capsid protein into the nucleoplasm. Immature capsids get stuck in the basket. Capsids encapsulate the pre-genomic RNA and the P protein. Pre-genomic RNA is reverse-transcribed into DNA while the capsid is still in the cytoplasm. The capsid can then either be directed to the nucleus, providing more genomes for transcription, or bud through the endoplasmic reticulum to provide new virions. The protein is Capsid protein of Homo sapiens (Human).